The sequence spans 186 residues: Large ribosomal subunit protein uL5m (186 aa).

It belongs to the universal ribosomal protein uL5 family.

The protein resides in the mitochondrion. The protein is Large ribosomal subunit protein uL5m (RPL5) of Solanum tuberosum (Potato).